Reading from the N-terminus, the 238-residue chain is Chorionic somatomammotropin hormone 2 (238 aa).

A signal peptide spans 1 to 36; sequence MAPAPSFRGHQWTYNPVRGSCLLLLLVVSNLLLCQG. Residue His-66 participates in Zn(2+) binding. N-linked (GlcNAc...) asparagine glycosylation is found at Asn-70, Asn-92, Asn-146, and Asn-160. Cys-97 and Cys-215 are disulfide-bonded. Asp-224 serves as a coordination point for Zn(2+). Residues Cys-232 and Cys-238 are joined by a disulfide bond.

This sequence belongs to the somatotropin/prolactin family.

It is found in the secreted. In Bos taurus (Bovine), this protein is Chorionic somatomammotropin hormone 2 (CSH2).